Reading from the N-terminus, the 454-residue chain is Bifunctional protein GlmU (454 aa).

The segment at 1–232 (MTDRTCLSIV…VDNVIGINNR (232 aa)) is pyrophosphorylase. UDP-N-acetyl-alpha-D-glucosamine-binding positions include 11–14 (LAAG), Lys25, Gln78, and 83–84 (GT). Asp108 serves as a coordination point for Mg(2+). Residues Gly144, Glu158, Asn173, and Asn230 each contribute to the UDP-N-acetyl-alpha-D-glucosamine site. Asn230 serves as a coordination point for Mg(2+). The interval 233-253 (VELAEAEAIWQQRKRREMMLA) is linker. The tract at residues 254–454 (GVTLIAPETV…AIKAAKTATK (201 aa)) is N-acetyltransferase. UDP-N-acetyl-alpha-D-glucosamine-binding residues include Arg319 and Lys337. Catalysis depends on His349, which acts as the Proton acceptor. Tyr352 and Asn363 together coordinate UDP-N-acetyl-alpha-D-glucosamine. Residues Ala366, 372 to 373 (NY), Ser391, Ser409, and Arg426 each bind acetyl-CoA.

It in the N-terminal section; belongs to the N-acetylglucosamine-1-phosphate uridyltransferase family. In the C-terminal section; belongs to the transferase hexapeptide repeat family. In terms of assembly, homotrimer. Mg(2+) serves as cofactor.

It localises to the cytoplasm. The enzyme catalyses alpha-D-glucosamine 1-phosphate + acetyl-CoA = N-acetyl-alpha-D-glucosamine 1-phosphate + CoA + H(+). The catalysed reaction is N-acetyl-alpha-D-glucosamine 1-phosphate + UTP + H(+) = UDP-N-acetyl-alpha-D-glucosamine + diphosphate. The protein operates within nucleotide-sugar biosynthesis; UDP-N-acetyl-alpha-D-glucosamine biosynthesis; N-acetyl-alpha-D-glucosamine 1-phosphate from alpha-D-glucosamine 6-phosphate (route II): step 2/2. It participates in nucleotide-sugar biosynthesis; UDP-N-acetyl-alpha-D-glucosamine biosynthesis; UDP-N-acetyl-alpha-D-glucosamine from N-acetyl-alpha-D-glucosamine 1-phosphate: step 1/1. It functions in the pathway bacterial outer membrane biogenesis; LPS lipid A biosynthesis. Its function is as follows. Catalyzes the last two sequential reactions in the de novo biosynthetic pathway for UDP-N-acetylglucosamine (UDP-GlcNAc). The C-terminal domain catalyzes the transfer of acetyl group from acetyl coenzyme A to glucosamine-1-phosphate (GlcN-1-P) to produce N-acetylglucosamine-1-phosphate (GlcNAc-1-P), which is converted into UDP-GlcNAc by the transfer of uridine 5-monophosphate (from uridine 5-triphosphate), a reaction catalyzed by the N-terminal domain. This Brucella anthropi (strain ATCC 49188 / DSM 6882 / CCUG 24695 / JCM 21032 / LMG 3331 / NBRC 15819 / NCTC 12168 / Alc 37) (Ochrobactrum anthropi) protein is Bifunctional protein GlmU.